The chain runs to 232 residues: Cilia- and flagella-associated protein 95 (232 aa).

At M1–K96 the chain is on the extracellular side. N75 carries an N-linked (GlcNAc...) asparagine glycan. Residues M97–L115 traverse the membrane as a helical segment. The Cytoplasmic segment spans residues N116–K232. Residues L153–P163 are mn.

Microtubule inner protein component of sperm flagellar doublet microtubules. Interacts with MYH9. Interacts with MYH10. In terms of tissue distribution, expressed in trachea multiciliated cells.

Its subcellular location is the cytoplasm. The protein localises to the cytoskeleton. The protein resides in the cilium axoneme. It localises to the flagellum axoneme. It is found in the cell membrane. Microtubule inner protein (MIP) part of the dynein-decorated doublet microtubules (DMTs) in cilia axoneme, which is required for motile cilia beating. The protein is Cilia- and flagella-associated protein 95 of Bos taurus (Bovine).